Consider the following 399-residue polypeptide: Protein shisa-8 (399 aa).

The N-terminal stretch at methionine 1–alanine 36 is a signal peptide. Topologically, residues glycine 37–serine 136 are extracellular. Residue asparagine 73 is glycosylated (N-linked (GlcNAc...) asparagine). Residues histidine 137 to alanine 157 form a helical membrane-spanning segment. Over arginine 158 to valine 399 the chain is Cytoplasmic. 2 disordered regions span residues glycine 207–leucine 248 and phenylalanine 378–valine 399. The segment covering leucine 389–valine 399 has biased composition (polar residues).

Belongs to the shisa family. As to quaternary structure, interacts with AMPAR subunits GRIA1 and GRIA2. Brain-specific. Highly expressed in cerebellum and olfactory bulb.

It is found in the membrane. May regulate trafficking and current kinetics of AMPA-type glutamate receptor (AMPAR) at synapses. This chain is Protein shisa-8, found in Mus musculus (Mouse).